The primary structure comprises 342 residues: Farnesyl pyrophosphate synthase 2 (342 aa).

Isopentenyl diphosphate is bound by residues K47, R50, and Q86. D93 and D97 together coordinate Mg(2+). R102 is a binding site for dimethylallyl diphosphate. R103 serves as a coordination point for isopentenyl diphosphate. Dimethylallyl diphosphate is bound by residues K190, T191, Q229, K246, and K255.

This sequence belongs to the FPP/GGPP synthase family. It depends on Mg(2+) as a cofactor.

It is found in the cytoplasm. The catalysed reaction is isopentenyl diphosphate + dimethylallyl diphosphate = (2E)-geranyl diphosphate + diphosphate. It catalyses the reaction isopentenyl diphosphate + (2E)-geranyl diphosphate = (2E,6E)-farnesyl diphosphate + diphosphate. The protein operates within isoprenoid biosynthesis; farnesyl diphosphate biosynthesis; farnesyl diphosphate from geranyl diphosphate and isopentenyl diphosphate: step 1/1. Its pathway is isoprenoid biosynthesis; geranyl diphosphate biosynthesis; geranyl diphosphate from dimethylallyl diphosphate and isopentenyl diphosphate: step 1/1. Its function is as follows. Catalyzes the sequential condensation of isopentenyl pyrophosphate with the allylic pyrophosphates, dimethylallyl pyrophosphate, and then with the resultant geranylpyrophosphate to the ultimate product farnesyl pyrophosphate. This is Farnesyl pyrophosphate synthase 2 (FPS2) from Lupinus albus (White lupine).